A 277-amino-acid polypeptide reads, in one-letter code: Uridine-cytidine kinase 1 (277 aa).

The disordered stretch occupies residues 1–30 (MASAGGGGSESAAPEADRPQPRPFLIGVSG). 30-38 (GGTASGKST) contributes to the ATP binding site. Positions 87, 115, 120, 169, 178, and 186 each coordinate substrate. Residue aspartate 215 coordinates ATP. Basic residues predominate over residues 238-250 (RHRGGPNGRNHKR). The interval 238-277 (RHRGGPNGRNHKRTFPEPGDHPGVLATGKRSHLESSSRPH) is disordered. A Phosphothreonine modification is found at threonine 251. Basic and acidic residues predominate over residues 268 to 277 (SHLESSSRPH).

It belongs to the uridine kinase family.

It catalyses the reaction uridine + ATP = UMP + ADP + H(+). It carries out the reaction cytidine + ATP = CMP + ADP + H(+). It functions in the pathway pyrimidine metabolism; CTP biosynthesis via salvage pathway; CTP from cytidine: step 1/3. Its pathway is pyrimidine metabolism; UMP biosynthesis via salvage pathway; UMP from uridine: step 1/1. In terms of biological role, phosphorylates uridine and cytidine to uridine monophosphate and cytidine monophosphate. Does not phosphorylate deoxyribonucleosides or purine ribonucleosides. Can use ATP or GTP as a phosphate donor. This Mus musculus (Mouse) protein is Uridine-cytidine kinase 1 (Uck1).